Reading from the N-terminus, the 450-residue chain is Divalent metal cation transporter MntH (450 aa).

11 consecutive transmembrane segments (helical) span residues 34 to 54 (LSFL…GNWI), 61 to 81 (AQYG…AMLL), 108 to 128 (IAII…IAEV), 141 to 161 (IPLI…LFIM), 170 to 190 (AIVG…VYIS), 212 to 232 (GILY…NLYL), 263 to 283 (IQLS…ASLF), 305 to 325 (PVLG…ALLA), 361 to 381 (SLAV…AAKI), 383 to 403 (QLLV…LIPL), and 422 to 442 (VNII…YLIV).

Belongs to the NRAMP family.

It localises to the cell membrane. Its function is as follows. H(+)-stimulated, divalent metal cation uptake system. In Staphylococcus aureus (strain bovine RF122 / ET3-1), this protein is Divalent metal cation transporter MntH.